A 209-amino-acid polypeptide reads, in one-letter code: Orotate phosphoribosyltransferase (209 aa).

5-phospho-alpha-D-ribose 1-diphosphate contacts are provided by residues arginine 96, lysine 100, histidine 102, and 122 to 130; that span reads EDLISTGGS. Serine 126 serves as a coordination point for orotate.

Belongs to the purine/pyrimidine phosphoribosyltransferase family. PyrE subfamily. As to quaternary structure, homodimer. The cofactor is Mg(2+).

It catalyses the reaction orotidine 5'-phosphate + diphosphate = orotate + 5-phospho-alpha-D-ribose 1-diphosphate. It participates in pyrimidine metabolism; UMP biosynthesis via de novo pathway; UMP from orotate: step 1/2. Its function is as follows. Catalyzes the transfer of a ribosyl phosphate group from 5-phosphoribose 1-diphosphate to orotate, leading to the formation of orotidine monophosphate (OMP). This chain is Orotate phosphoribosyltransferase, found in Lactococcus lactis subsp. cremoris (strain SK11).